The sequence spans 457 residues: MFDPKYLESGEFYQRRYRNFPTLIIVPIFLLVVFIVLFSLFAKREIVVKASGEIIPAKVLSDIQSTSNNAIDSNQLAENKMVKKGDTLVTFTSGNEKISSQLLTQQINNLNNRIQSLDTYKHSIIDGRSEFGGTDQFGYDNLFNGYMAQVDTLTSEFNQQNSDKQTADQQANHQIDVLKQGQSKNNQQLANYQAILTSINSNTKPTNNPYQSIYDNYAAQLKSAQTTDDKEQVKQTALSSVQQQIDQLQTTSSSYDSQIAGITKSGPLSQSSTLDKIADLKQQQLASAQKEINDQQQSLDELKAKQSSANEDYQDTVIKAPESGILHLTSDKATIKYFPKGTTVTQIYPMLNKRTKLSVEYYVPTSNSVGLKRGQNIRFVANQNVTKPLILTGTIKTISSAPIIIKEESFYKCIASINVNVREHEQIKYGLAGKVTTTKGTKTWFNYYKDILLGNTN.

Residues 22–42 (TLIIVPIFLLVVFIVLFSLFA) traverse the membrane as a helical segment.

Belongs to the membrane fusion protein (MFP) (TC 8.A.1) family.

It localises to the membrane. Its function is as follows. Involved in the secretion of mesentericin Y105. In Leuconostoc mesenteroides, this protein is Mesentericin Y105 secretion protein MesE (mesE).